The sequence spans 95 residues: Large ribosomal subunit protein uL23 (95 aa).

It belongs to the universal ribosomal protein uL23 family. As to quaternary structure, part of the 50S ribosomal subunit. Contacts protein L29, and trigger factor when it is bound to the ribosome.

Functionally, one of the early assembly proteins it binds 23S rRNA. One of the proteins that surrounds the polypeptide exit tunnel on the outside of the ribosome. Forms the main docking site for trigger factor binding to the ribosome. The polypeptide is Large ribosomal subunit protein uL23 (Shouchella clausii (strain KSM-K16) (Alkalihalobacillus clausii)).